The following is a 302-amino-acid chain: Heme A synthase (302 aa).

The Cytoplasmic portion of the chain corresponds to 1 to 8 (MFSKKNLK). A helical membrane pass occupies residues 9–29 (WLSVLATVIMAFVQLGGALVT). Topologically, residues 30 to 67 (KTGSADGCGSDWPLCHGAFLPQNLPIQTLIELSHRAVS) are extracellular. C37 and C44 form a disulfide bridge. E60 is a catalytic residue. H63 serves as a coordination point for heme o. The chain crosses the membrane as a helical span at residues 68–88 (GLSLIVVLWLVIVAWKHIGYI). Topologically, residues 89-93 (KEVKP) are cytoplasmic. Residues 94–114 (LSCISVGFLLIQALVGAAAVM) traverse the membrane as a helical segment. Residues 115–122 (WQQNAYVL) lie on the Extracellular side of the membrane. The chain crosses the membrane as a helical span at residues 123–143 (ALHFGISLISFSSVFVLTLII). A heme o-binding site is contributed by H125. Residues 144–161 (YEVDRKYEADELFIRKPL) lie on the Cytoplasmic side of the membrane. A helical transmembrane segment spans residues 162-182 (RIYTWIMALIVYMTIYTGALV). Topologically, residues 183 to 215 (RHKEASLAYGQWPLPFNDLMPHNVQDWVNLTHR) are extracellular. H214 lines the heme b pocket. A helical transmembrane segment spans residues 216–236 (GMALIAFIWILITFIHAVNNY). Over 237 to 244 (RENRTIRY) the chain is Cytoplasmic. A helical membrane pass occupies residues 245–265 (GYTAAFILVILQVTTGALSII). At 266 to 271 (TEVNLF) the chain is on the extracellular side. The helical transmembrane segment at 272-292 (IALLHALFITLLFGLIAYFII) threads the bilayer. Heme b is bound at residue H276. Over 293–302 (LMLRTIRSGG) the chain is Cytoplasmic.

It belongs to the COX15/CtaA family. Type 1 subfamily. As to quaternary structure, interacts with CtaB. The cofactor is heme b.

The protein localises to the cell membrane. It catalyses the reaction Fe(II)-heme o + 2 A + H2O = Fe(II)-heme a + 2 AH2. It participates in porphyrin-containing compound metabolism; heme A biosynthesis; heme A from heme O: step 1/1. Functionally, catalyzes the conversion of heme O to heme A by two successive hydroxylations of the methyl group at C8. The first hydroxylation forms heme I, the second hydroxylation results in an unstable dihydroxymethyl group, which spontaneously dehydrates, resulting in the formyl group of heme A. The protein is Heme A synthase of Staphylococcus saprophyticus subsp. saprophyticus (strain ATCC 15305 / DSM 20229 / NCIMB 8711 / NCTC 7292 / S-41).